A 234-amino-acid chain; its full sequence is Large ribosomal subunit protein uL1 (234 aa).

The protein belongs to the universal ribosomal protein uL1 family. Part of the 50S ribosomal subunit.

In terms of biological role, binds directly to 23S rRNA. The L1 stalk is quite mobile in the ribosome, and is involved in E site tRNA release. Its function is as follows. Protein L1 is also a translational repressor protein, it controls the translation of the L11 operon by binding to its mRNA. The chain is Large ribosomal subunit protein uL1 from Vibrio atlanticus (strain LGP32) (Vibrio splendidus (strain Mel32)).